We begin with the raw amino-acid sequence, 882 residues long: Alanine--tRNA ligase (882 aa).

Zn(2+)-binding residues include H571, H575, C673, and H677.

It belongs to the class-II aminoacyl-tRNA synthetase family. The cofactor is Zn(2+).

The protein localises to the cytoplasm. The catalysed reaction is tRNA(Ala) + L-alanine + ATP = L-alanyl-tRNA(Ala) + AMP + diphosphate. Its function is as follows. Catalyzes the attachment of alanine to tRNA(Ala) in a two-step reaction: alanine is first activated by ATP to form Ala-AMP and then transferred to the acceptor end of tRNA(Ala). Also edits incorrectly charged Ser-tRNA(Ala) and Gly-tRNA(Ala) via its editing domain. The sequence is that of Alanine--tRNA ligase from Desulfotalea psychrophila (strain LSv54 / DSM 12343).